A 261-amino-acid chain; its full sequence is 5'-nucleotidase SurE (261 aa).

4 residues coordinate a divalent metal cation: Asp-17, Asp-18, Ser-48, and Asn-104.

Belongs to the SurE nucleotidase family. The cofactor is a divalent metal cation.

The protein localises to the cytoplasm. It carries out the reaction a ribonucleoside 5'-phosphate + H2O = a ribonucleoside + phosphate. Functionally, nucleotidase that shows phosphatase activity on nucleoside 5'-monophosphates. In Deinococcus geothermalis (strain DSM 11300 / CIP 105573 / AG-3a), this protein is 5'-nucleotidase SurE.